Consider the following 607-residue polypeptide: ENTH domain-containing protein 1 (607 aa).

One can recognise an ENTH domain in the interval 9–141 (NFVKNYSDAE…MDEPLLCKER (133 aa)). Residues 543-574 (EAKNSISVLLREVKRAIARLHEDLSTVIQELN) are a coiled coil.

The protein is ENTH domain-containing protein 1 (ENTHD1) of Homo sapiens (Human).